A 208-amino-acid chain; its full sequence is Small ribosomal subunit protein uS9c (208 aa).

The N-terminal 51 residues, 1-51 (MAVSISSLTSSFASLSFTSNLTPKPQTLPMARTKPFSLSNPAVVKPLVITA), are a transit peptide targeting the chloroplast. T52 is subject to N-acetylthreonine. Residues 185–208 (DSRIVERKKPGLKKARKAPQFSKR) are disordered. Over residues 194–208 (PGLKKARKAPQFSKR) the composition is skewed to basic residues.

Component of the chloroplast small ribosomal subunit (SSU). Mature 70S chloroplast ribosomes of higher plants consist of a small (30S) and a large (50S) subunit. The 30S small subunit contains 1 molecule of ribosomal RNA (16S rRNA) and 24 different proteins. The 50S large subunit contains 3 rRNA molecules (23S, 5S and 4.5S rRNA) and 33 different proteins. uS9c binds directly to 16S ribosomal RNA. uS9c interacts with translation factor pY (PSRP1).

The protein localises to the plastid. It localises to the chloroplast. Component of the chloroplast ribosome (chloro-ribosome), a dedicated translation machinery responsible for the synthesis of chloroplast genome-encoded proteins, including proteins of the transcription and translation machinery and components of the photosynthetic apparatus. In Spinacia oleracea (Spinach), this protein is Small ribosomal subunit protein uS9c (PRPS9).